The primary structure comprises 326 residues: UDP-N-acetylglucosamine transporter (326 aa).

The next 8 membrane-spanning stretches (helical) occupy residues 4–24, 38–58, 136–156, 174–194, 212–232, 244–264, 269–289, and 293–313; these read NLKY…VLTM, LSST…ILLV, LGVY…FVQW, FVGL…GVYF, LGFF…GELV, LTWI…AVIK, ILKG…SYFW, and FVPT…TFLY.

This sequence belongs to the nucleotide-sugar transporter family. SLC35A subfamily. As to quaternary structure, interacts with SLC35A2; the interaction is reduced in the presence of SLC35A4. Found in a complex with SLC35A2 and SLC35A4. Interacts with MGAT4B. Post-translationally, O-Glcnacylation regulates the stability of SLC35A3 and the specific complex formation with MGAT4B.

Its subcellular location is the golgi apparatus membrane. It catalyses the reaction UMP(out) + UDP-N-acetyl-alpha-D-glucosamine(in) = UMP(in) + UDP-N-acetyl-alpha-D-glucosamine(out). In terms of biological role, transports diphosphate-N-acetylglucosamine (UDP-GlcNAc) from the cytosol into the lumen of the Golgi apparatus, functioning as an antiporter that exchanges UDP-N-acetyl-alpha-D-glucosamine for UMP. May supply UDP-GlcNAc as substrate for Golgi-resident glycosyltransferases that generate highly branched, multiantennary complex N-glycans and keratan sulfate. However, the exact role of SLC35A3 still needs to be elucidated, it could be a member of a catalytically more efficient multiprotein complex rather than function independently as a single transporter. This chain is UDP-N-acetylglucosamine transporter (SLC35A3), found in Bos taurus (Bovine).